The primary structure comprises 467 residues: MAQKLVAQGGETGDVWDDGVYDNVTKVYVGQGQYGIAFVKFEYANGSEVVVGDEHGEKTELGVEEFEIDSDDYIVYVEGYREKVSDMTSEMITFLSFKTSKGKTSQPIVKKPGVKFVLHGGKIVGFHGRSTDVLHSLGAYVSLPSTPKLLGNWIKVEQNGEGPGLRCSHGIAQVGNKIYSFGGELIPNQPIDKHLYVFDLETRTWSIAPATGDVPHLSCLGVRMVSVGSTLYTFGGRDFSRQYNGFYSFDTTTNEWKLLTPVEEGPTPRSFHSMAADEENVYVFGGVGAMDRIKTLDSYNIVDKTWFHCSNPGDSFSIRGGAGLEVVQGKVWIVYGFNGCEVDDVHFYDPAEDKWTQVETFGVKPNERSVFASAAIGKHIVIFGGEIAMDPRAHVGPGQLIDGTFALDTETLQWERLDKFEGTPSSRGWTASTTGTIDGKKGLVMHGGKAPTNDRFDDLFFYGIDSV.

In terms of domain architecture, Jacalin-type lectin spans 2–143 (AQKLVAQGGE…LHSLGAYVSL (142 aa)). 5 Kelch repeats span residues 177 to 225 (KIYS…VRMV), 230 to 276 (TLYT…SMAA), 280 to 329 (NVYV…VVQG), 331 to 375 (VWIV…ASAA), and 379 to 434 (HIVI…ASTT). The active-site Proton donor is R237. 5 residues coordinate a (Z)-N-(sulfonatooxy)alkanimidothioate: R237, S270, R292, G321, and V370. R292 serves as the catalytic Proton donor. 3 residues coordinate Fe(2+): E386, D390, and H394. W429 lines the a (Z)-N-(sulfonatooxy)alkanimidothioate pocket.

The protein belongs to the jacalin lectin family. Fe(2+) is required as a cofactor. As to expression, mainly expressed in roots, and, at low levels, in seedlings and leaves. Observed in seeds.

It catalyses the reaction a (Z)-N-(sulfonatooxy)alkanimidothioate = a nitrile + sulfur + sulfate. The catalysed reaction is (Z)-phenyl-N-(sulfonatooxy)methanimidothioate = phenylacetonitrile + sulfur + sulfate. The enzyme catalyses (Z)-N-(sulfonatooxy)prop-2-enimidothioate = but-3-enenitrile + sulfur + sulfate. Specifier protein responsible for constitutive and herbivore-induced simple nitrile formation, especially in roots. Promotes simple nitriles, but not epithionitrile or thiocyanate formation. Converts allylglucosinolate and benzylglucosinolate (glucotropaeolin) to their corresponding simple nitriles in the presence of myrosinase. The polypeptide is Thiohydroximate-O-sulfate sulfur/sulfate-lyase (nitrile-forming) NSP3 (Arabidopsis thaliana (Mouse-ear cress)).